Reading from the N-terminus, the 468-residue chain is Anthocyanidin 3-O-glucoside 2'''-O-xylosyltransferase (468 aa).

UDP-alpha-D-xylose is bound by residues S284, I344–Q346, H361–E369, and H383–Q386.

It belongs to the UDP-glycosyltransferase family.

It carries out the reaction an anthocyanidin 3-O-beta-D-glucoside + UDP-alpha-D-xylose = an anthocyanidin 3-O-beta-D-sambubioside + UDP + 2 H(+). It participates in secondary metabolite biosynthesis; flavonoid biosynthesis. In terms of biological role, contributes to the last few anthocyanin biosynthetic steps. Converts cyanidin 3-O-glucoside to cyanidin 3-O-xylosyl(1-&gt;2)glucoside. Can use 3-O-glucosylated anthocyanidins/flavonols and uridine diphosphate (UDP)-xylose as substrates. The sequence is that of Anthocyanidin 3-O-glucoside 2'''-O-xylosyltransferase (A3G2XYLT) from Arabidopsis thaliana (Mouse-ear cress).